Here is a 169-residue protein sequence, read N- to C-terminus: Ribosome maturation factor RimM (169 aa).

Residues 92-167 (PKDTYFICDI…YMKIKVVEGL (76 aa)) form the PRC barrel domain.

Belongs to the RimM family. As to quaternary structure, binds ribosomal protein uS19.

It is found in the cytoplasm. An accessory protein needed during the final step in the assembly of 30S ribosomal subunit, possibly for assembly of the head region. Essential for efficient processing of 16S rRNA. May be needed both before and after RbfA during the maturation of 16S rRNA. It has affinity for free ribosomal 30S subunits but not for 70S ribosomes. The protein is Ribosome maturation factor RimM of Caldicellulosiruptor bescii (strain ATCC BAA-1888 / DSM 6725 / KCTC 15123 / Z-1320) (Anaerocellum thermophilum).